Reading from the N-terminus, the 136-residue chain is Small ribosomal subunit protein uS8c (136 aa).

It belongs to the universal ribosomal protein uS8 family. As to quaternary structure, part of the 30S ribosomal subunit.

It localises to the plastid. The protein resides in the chloroplast. In terms of biological role, one of the primary rRNA binding proteins, it binds directly to 16S rRNA central domain where it helps coordinate assembly of the platform of the 30S subunit. This chain is Small ribosomal subunit protein uS8c (rps8), found in Hordeum vulgare (Barley).